The chain runs to 102 residues: Small ribosomal subunit protein uS10 (102 aa).

It belongs to the universal ribosomal protein uS10 family. As to quaternary structure, part of the 30S ribosomal subunit.

In terms of biological role, involved in the binding of tRNA to the ribosomes. This chain is Small ribosomal subunit protein uS10, found in Heliobacterium modesticaldum (strain ATCC 51547 / Ice1).